The sequence spans 673 residues: tRNA uridine 5-carboxymethylaminomethyl modification enzyme MnmG (673 aa).

FAD is bound at residue 17-22 (GGGHAG). 284–298 (GPRYCPSVEDKINRF) provides a ligand contact to NAD(+).

It belongs to the MnmG family. Homodimer. Heterotetramer of two MnmE and two MnmG subunits. FAD serves as cofactor.

The protein localises to the cytoplasm. Functionally, NAD-binding protein involved in the addition of a carboxymethylaminomethyl (cmnm) group at the wobble position (U34) of certain tRNAs, forming tRNA-cmnm(5)s(2)U34. This chain is tRNA uridine 5-carboxymethylaminomethyl modification enzyme MnmG, found in Polaromonas sp. (strain JS666 / ATCC BAA-500).